We begin with the raw amino-acid sequence, 294 residues long: tRNA dimethylallyltransferase (294 aa).

11 to 18 (GPTAVGKT) contacts ATP. 13–18 (TAVGKT) serves as a coordination point for substrate. The interaction with substrate tRNA stretch occupies residues 36 to 39 (DSQQ).

It belongs to the IPP transferase family. As to quaternary structure, monomer. It depends on Mg(2+) as a cofactor.

The catalysed reaction is adenosine(37) in tRNA + dimethylallyl diphosphate = N(6)-dimethylallyladenosine(37) in tRNA + diphosphate. In terms of biological role, catalyzes the transfer of a dimethylallyl group onto the adenine at position 37 in tRNAs that read codons beginning with uridine, leading to the formation of N6-(dimethylallyl)adenosine (i(6)A). The protein is tRNA dimethylallyltransferase of Lactococcus lactis subsp. lactis (strain IL1403) (Streptococcus lactis).